A 340-amino-acid chain; its full sequence is NAD kinase (340 aa).

The active-site Proton acceptor is D66. NAD(+) is bound by residues 66-67, R71, 141-142, K152, D171, 182-187, and A206; these read DG, ND, and TAYAFS. A disordered region spans residues 321-340; sequence AGVAGTEPDKPGERDGKAGS. Over residues 327–340 the composition is skewed to basic and acidic residues; sequence EPDKPGERDGKAGS.

Belongs to the NAD kinase family. It depends on a divalent metal cation as a cofactor.

It is found in the cytoplasm. It carries out the reaction NAD(+) + ATP = ADP + NADP(+) + H(+). In terms of biological role, involved in the regulation of the intracellular balance of NAD and NADP, and is a key enzyme in the biosynthesis of NADP. Catalyzes specifically the phosphorylation on 2'-hydroxyl of the adenosine moiety of NAD to yield NADP. The protein is NAD kinase of Bifidobacterium longum (strain DJO10A).